A 158-amino-acid polypeptide reads, in one-letter code: SsrA-binding protein (158 aa).

Belongs to the SmpB family.

It localises to the cytoplasm. Required for rescue of stalled ribosomes mediated by trans-translation. Binds to transfer-messenger RNA (tmRNA), required for stable association of tmRNA with ribosomes. tmRNA and SmpB together mimic tRNA shape, replacing the anticodon stem-loop with SmpB. tmRNA is encoded by the ssrA gene; the 2 termini fold to resemble tRNA(Ala) and it encodes a 'tag peptide', a short internal open reading frame. During trans-translation Ala-aminoacylated tmRNA acts like a tRNA, entering the A-site of stalled ribosomes, displacing the stalled mRNA. The ribosome then switches to translate the ORF on the tmRNA; the nascent peptide is terminated with the 'tag peptide' encoded by the tmRNA and targeted for degradation. The ribosome is freed to recommence translation, which seems to be the essential function of trans-translation. In Psychrobacter sp. (strain PRwf-1), this protein is SsrA-binding protein.